A 526-amino-acid chain; its full sequence is Delayed-rectifier potassium channel regulatory subunit KCNS1 (526 aa).

The Cytoplasmic segment spans residues 1-217 (MLMLLVRGTH…LTMENPGYSL (217 aa)). The chain crosses the membrane as a helical span at residues 218–239 (PSKLFSCVSISVVLASIAAMCI). The Extracellular segment spans residues 240–270 (HSLPEYQAREAAAAVAAVAAGRSPEGVRDDP). A helical membrane pass occupies residues 271–293 (VLRRLEYFCIAWFSFEVSSRLLL). The Cytoplasmic segment spans residues 294–304 (APSTRNFFCHP). A helical transmembrane segment spans residues 305-322 (LNLIDIVSVLPFYLTLLA). The Extracellular portion of the chain corresponds to 323–337 (GVALGDQGGKEFGHL). A helical; Voltage-sensor transmembrane segment spans residues 338 to 358 (GKVVQVFRLMRIFRVLKLARH). At 359-373 (STGLRSLGATLKHSY) the chain is on the cytoplasmic side. The helical transmembrane segment at 374–395 (REVGILLLYLAVGVSVFSGVAY) threads the bilayer. The Extracellular segment spans residues 396 to 408 (TAEKEEDVGFNTI). An intramembrane region (helical) is located at residues 409–420 (PACWWWGTVSMT). Residues 421-426 (TVGYGD) carry the Selectivity filter motif. An intramembrane segment occupies 421–428 (TVGYGDVV). Over 429–435 (PVTVAGK) the chain is Extracellular. The helical transmembrane segment at 436 to 464 (LAASGCILGGILVVALPITIIFNKFSHFY) threads the bilayer. Residues 465–526 (RRQKALEAAV…PSEPPHPQMY (62 aa)) are Cytoplasmic-facing. Positions 491–526 (GVSEASLETSRETSQEGRSADLESQAPSEPPHPQMY) are disordered. Positions 499–511 (TSRETSQEGRSAD) are enriched in basic and acidic residues.

The protein belongs to the potassium channel family. S (TC 1.A.1.2) subfamily. Kv9.1/KCNS1 sub-subfamily. As to quaternary structure, heterotetramer with KCNB1. Heterotetramer with KCNB2. Does not form homomultimers.

The protein localises to the cell membrane. Functionally, potassium channel regulatory subunit that modulate the delayed rectifier voltage-gated potassium channel activity of KCNB1 and KCNB2 by altering their kinetics, expression levels, and shifting the half-inactivation potential to more polarized values. While it does not form functional channels on its own, it can form functional heterotetrameric channels with KCNB1 and KCNB2. Each regulatory subunit has unique regulatory properties that can lead to extensive inhibition, significant changes in kinetics, and/or substantial shifts in the voltage dependencies of the inactivation process. The chain is Delayed-rectifier potassium channel regulatory subunit KCNS1 from Pan troglodytes (Chimpanzee).